A 156-amino-acid polypeptide reads, in one-letter code: ATP synthase subunit b (156 aa).

The chain crosses the membrane as a helical span at residues 5–25 (LTLIGQAIAFAVFVWFCMKFV).

The protein belongs to the ATPase B chain family. In terms of assembly, F-type ATPases have 2 components, F(1) - the catalytic core - and F(0) - the membrane proton channel. F(1) has five subunits: alpha(3), beta(3), gamma(1), delta(1), epsilon(1). F(0) has three main subunits: a(1), b(2) and c(10-14). The alpha and beta chains form an alternating ring which encloses part of the gamma chain. F(1) is attached to F(0) by a central stalk formed by the gamma and epsilon chains, while a peripheral stalk is formed by the delta and b chains.

Its subcellular location is the cell inner membrane. Its function is as follows. F(1)F(0) ATP synthase produces ATP from ADP in the presence of a proton or sodium gradient. F-type ATPases consist of two structural domains, F(1) containing the extramembraneous catalytic core and F(0) containing the membrane proton channel, linked together by a central stalk and a peripheral stalk. During catalysis, ATP synthesis in the catalytic domain of F(1) is coupled via a rotary mechanism of the central stalk subunits to proton translocation. In terms of biological role, component of the F(0) channel, it forms part of the peripheral stalk, linking F(1) to F(0). The protein is ATP synthase subunit b of Chromohalobacter salexigens (strain ATCC BAA-138 / DSM 3043 / CIP 106854 / NCIMB 13768 / 1H11).